We begin with the raw amino-acid sequence, 1556 residues long: MADRSLEGMALPLEVRARLAELELELSEGDITQKGYEKKRSKLIGAYLPQPPRVDQALPQERRAPVTPSSASRYHRRRSSGSRDERYRSDVHTEAVQAALAKHKERKMAVPMPSKRRSLVVQTSMDAYTPPDTSSGSEDEGSVQGDSQGTPTSSQGSINMEHWISQAIHGSTTSTTSSSSTQSGGSGAAHRLADVMAQTHIENHSAPPDVTTYTSEHSIQVERPQGSTGSRTAPKYGNAELMETGDGVPVSSRVSAKIQQLVNTLKRPKRPPLREFFVDDFEELLEVQQPDPNQPKPEGAQMLAMRGEQLGVVTNWPPSLEAALQRWGTISPKAPCLTTMDTNGKPLYILTYGKLWTRSMKVAYSILHKLGTKQEPMVRPGDRVALVFPNNDPAAFMAAFYGCLLAEVVPVPIEVPLTRKDAGSQQIGFLLGSCGVTVALTSDACHKGLPKSPTGEIPQFKGWPKLLWFVTESKHLSKPPRDWFPHIKDANNDTAYIEYKTCKDGSVLGVTVTRTALLTHCQALTQACGYTEAETIVNVLDFKKDVGLWHGILTSVMNMMHVISIPYSLMKVNPLSWIQKVCQYKAKVACVKSRDMHWALVAHRDQRDINLSSLRMLIVADGANPWSISSCDAFLNVFQSKGLRQEVICPCASSPEALTVAIRRPTDDSNQPPGRGVLSMHGLTYGVIRVDSEEKLSVLTVQDVGLVMPGAIMCSVKPDGVPQLCRTDEIGELCVCAVATGTSYYGLSGMTKNTFEVFPMTSSGAPISEYPFIRTGLLGFVGPGGLVFVVGKMDGLMVVSGRRHNADDIVATALAVEPMKFVYRGRIAVFSVTVLHDERIVIVAEQRPDSTEEDSFQWMSRVLQAIDSIHQVGVYCLALVPANTLPKTPLGGIHLSETKQLFLEGSLHPCNVLMCPHTCVTNLPKPRQKQPEIGPASVMVGNLVSGKRIAQASGRDLGQIEDNDQARKFLFLSEVLQWRAQTTPDHILYTLLNCRGAIANSLTCVQLHKRAEKIAVMLMERGHLQDGDHVALVYPPGIDLIAAFYGCLYAGCVPITVRPPHPQNIATTLPTVKMIVEVSRSACLMTTQLICKLLRSREAAAAVDVRTWPLILDTDDLPKKRPAQICKPCNPDTLAYLDFSVSTTGMLAGVKMSHAATSAFCRSIKLQCELYPSREVAICLDPYCGLGFVLWCLCSVYSGHQSILIPPSELETNPALWLLAVSQYKVRDTFCSYSVMELCTKGLGSQTESLKARGLDLSRVRTCVVVAEERPRIALTQSFSKLFKDLGLHPRAVSTSFGCRVNLAICLQGTSGPDPTTVYVDMRALRHDRVRLVERGSPHSLPLMESGKILPGVRIIIANPETKGPLGDSHLGEIWVHSAHNASGYFTIYGDESLQSDHFNSRLSFGDTQTIWARTGYLGFLRRTELTDANGERHDALYVVGALDEAMELRGMRYHPIDIETSVIRAHKSVTECAVFTWTNLLVVVVELDGSEQEALDLVPLVTNVVLEEHYLIVGVVVVVDIGVIPINSRGEKQRMHLRDGFLADQLDPIYVAYNM.

Residues 7-120 (EGMALPLEVR…PMPSKRRSLV (114 aa)) form the DMAP1-binding domain. 2 disordered regions span residues 47–157 (YLPQ…SQGS) and 170–189 (GSTT…SGAA). Over residues 81–93 (GSRDERYRSDVHT) the composition is skewed to basic and acidic residues. Polar residues-rich tracts occupy residues 120–136 (VVQT…TSSG) and 144–157 (QGDS…SQGS). Over residues 170 to 183 (GSTTSTTSSSSTQS) the composition is skewed to low complexity. Thr264 is modified (phosphothreonine).

The protein belongs to the DIP2 family.

The sequence is that of Disco-interacting protein 2 homolog C (DIP2C) from Homo sapiens (Human).